The chain runs to 438 residues: Glutamate-1-semialdehyde 2,1-aminomutase (438 aa).

N6-(pyridoxal phosphate)lysine is present on lysine 274.

This sequence belongs to the class-III pyridoxal-phosphate-dependent aminotransferase family. HemL subfamily. Homodimer. Pyridoxal 5'-phosphate serves as cofactor.

It is found in the cytoplasm. The enzyme catalyses (S)-4-amino-5-oxopentanoate = 5-aminolevulinate. It participates in porphyrin-containing compound metabolism; protoporphyrin-IX biosynthesis; 5-aminolevulinate from L-glutamyl-tRNA(Glu): step 2/2. In Salinibacter ruber (strain DSM 13855 / M31), this protein is Glutamate-1-semialdehyde 2,1-aminomutase.